Here is a 412-residue protein sequence, read N- to C-terminus: Multifunctional CCA protein (412 aa).

ATP contacts are provided by Gly8 and Arg11. Gly8 and Arg11 together coordinate CTP. Mg(2+) contacts are provided by Asp21 and Asp23. Residues Arg91, Arg137, and Arg140 each contribute to the ATP site. CTP is bound by residues Arg91, Arg137, and Arg140. The HD domain occupies 228–329 (TGIHTLMTLS…VKLFDSIDAW (102 aa)).

Belongs to the tRNA nucleotidyltransferase/poly(A) polymerase family. Bacterial CCA-adding enzyme type 1 subfamily. In terms of assembly, monomer. Can also form homodimers and oligomers. It depends on Mg(2+) as a cofactor. Ni(2+) is required as a cofactor.

It catalyses the reaction a tRNA precursor + 2 CTP + ATP = a tRNA with a 3' CCA end + 3 diphosphate. The enzyme catalyses a tRNA with a 3' CCA end + 2 CTP + ATP = a tRNA with a 3' CCACCA end + 3 diphosphate. In terms of biological role, catalyzes the addition and repair of the essential 3'-terminal CCA sequence in tRNAs without using a nucleic acid template. Adds these three nucleotides in the order of C, C, and A to the tRNA nucleotide-73, using CTP and ATP as substrates and producing inorganic pyrophosphate. tRNA 3'-terminal CCA addition is required both for tRNA processing and repair. Also involved in tRNA surveillance by mediating tandem CCA addition to generate a CCACCA at the 3' terminus of unstable tRNAs. While stable tRNAs receive only 3'-terminal CCA, unstable tRNAs are marked with CCACCA and rapidly degraded. This chain is Multifunctional CCA protein, found in Escherichia coli O6:H1 (strain CFT073 / ATCC 700928 / UPEC).